Here is a 274-residue protein sequence, read N- to C-terminus: Large ribosomal subunit protein uL2 (274 aa).

The disordered stretch occupies residues 220 to 265 (VRGAAMNPRDHPHGGGEGRAPRGMSTPKTKWGKPARGVKTRHNPRF). A compositionally biased stretch (basic and acidic residues) spans 227–239 (PRDHPHGGGEGRA). Basic residues predominate over residues 249-262 (KWGKPARGVKTRHN).

It belongs to the universal ribosomal protein uL2 family. Part of the 50S ribosomal subunit. Forms a bridge to the 30S subunit in the 70S ribosome.

In terms of biological role, one of the primary rRNA binding proteins. Required for association of the 30S and 50S subunits to form the 70S ribosome, for tRNA binding and peptide bond formation. It has been suggested to have peptidyltransferase activity; this is somewhat controversial. Makes several contacts with the 16S rRNA in the 70S ribosome. This chain is Large ribosomal subunit protein uL2, found in Chloroflexus aurantiacus (strain ATCC 29364 / DSM 637 / Y-400-fl).